Consider the following 501-residue polypeptide: MLDLKQYEVWFITGSQHLYGPETLEQVAKHSQIIAAGLDQSSTIPVRVVFKPVLKTPDEIYNLVLEANAAKNCIGLVAWMHTFSPAKMWIAGLRSLQKPLAHLHTQFNSEIPWSEIDMDFMNLNQAAHGDREFGFIVSRMRLERKVIVGHWQDSEVHDRIAAWTRAAAAWHDAQGARFARFGDNMREVAVTEGDKVNAQMRLGYSVSGYGVGDLVRFVNEVSDADIDSTLQEYAEQYELAAGLQAGGEQHHSLREAARIELGLRYFLEHGNFKGFTTTFEDLHGLVQLPGLGPQRLMDRGYGFAGEGDWKTAALVRAMKVMSAGLNGGTSFMEDYTYHFGSNGMKVLGAHMLEICPSIAATKPRLEVHPLGIGGKADPVRMVFDAKTGPAVNASIVEMGNRLRLINSVVDAVETDQPLPKLPVARALWLPQPDLKTAAAAWIYAGGAHHTGFSFDLTSEHLADFAEIAGMEYLQIDRNTNVQQFKQELRWNDLYYHLAKGL.

Mn(2+)-binding residues include Glu-306, Glu-333, His-350, and His-449.

This sequence belongs to the arabinose isomerase family. The cofactor is Mn(2+).

It catalyses the reaction beta-L-arabinopyranose = L-ribulose. It participates in carbohydrate degradation; L-arabinose degradation via L-ribulose; D-xylulose 5-phosphate from L-arabinose (bacterial route): step 1/3. Functionally, catalyzes the conversion of L-arabinose to L-ribulose. This Herpetosiphon aurantiacus (strain ATCC 23779 / DSM 785 / 114-95) protein is L-arabinose isomerase.